Here is a 192-residue protein sequence, read N- to C-terminus: Ethylene-responsive transcription factor ERF027 (192 aa).

The segment at residues 18–74 (VYRGIRCRSGKWVSEIREPRKTTRIWLGTYPMAEMAAAAYDVAAMALKGREAVLNFP) is a DNA-binding region (AP2/ERF). Disordered regions lie at residues 104 to 132 (CEEG…HVDN) and 167 to 192 (APPS…LWGY). Acidic residues predominate over residues 179-192 (DSPENSNDEDLWGY).

This sequence belongs to the AP2/ERF transcription factor family. ERF subfamily.

Its subcellular location is the nucleus. Functionally, probably acts as a transcriptional activator. Binds to the GCC-box pathogenesis-related promoter element. May be involved in the regulation of gene expression by stress factors and by components of stress signal transduction pathways. The protein is Ethylene-responsive transcription factor ERF027 (ERF027) of Arabidopsis thaliana (Mouse-ear cress).